Here is a 295-residue protein sequence, read N- to C-terminus: Bifunctional protein FolD (295 aa).

Residues 177–179 (GRS) and serine 202 contribute to the NADP(+) site.

Belongs to the tetrahydrofolate dehydrogenase/cyclohydrolase family. Homodimer.

The enzyme catalyses (6R)-5,10-methylene-5,6,7,8-tetrahydrofolate + NADP(+) = (6R)-5,10-methenyltetrahydrofolate + NADPH. It carries out the reaction (6R)-5,10-methenyltetrahydrofolate + H2O = (6R)-10-formyltetrahydrofolate + H(+). The protein operates within one-carbon metabolism; tetrahydrofolate interconversion. Its function is as follows. Catalyzes the oxidation of 5,10-methylenetetrahydrofolate to 5,10-methenyltetrahydrofolate and then the hydrolysis of 5,10-methenyltetrahydrofolate to 10-formyltetrahydrofolate. In Psychrobacter arcticus (strain DSM 17307 / VKM B-2377 / 273-4), this protein is Bifunctional protein FolD.